The chain runs to 92 residues: MSAEVALVYRVLPESVEVDIEKLKTSVINKLSPKYKVDRVEVEEIGFGIKALRFFIRMPESDEYSSDEVEELLRSVEGVGGYELEYFSRLSF.

It belongs to the EF-1-beta/EF-1-delta family.

Its function is as follows. Promotes the exchange of GDP for GTP in EF-1-alpha/GDP, thus allowing the regeneration of EF-1-alpha/GTP that could then be used to form the ternary complex EF-1-alpha/GTP/AAtRNA. The sequence is that of Elongation factor 1-beta from Pyrobaculum neutrophilum (strain DSM 2338 / JCM 9278 / NBRC 100436 / V24Sta) (Thermoproteus neutrophilus).